Consider the following 815-residue polypeptide: Phenylalanine--tRNA ligase beta subunit (815 aa).

The tRNA-binding domain occupies 39 to 153 (ASHAQGVVVG…NVPDLGQPVG (115 aa)). The 85-residue stretch at 414 to 498 (KSAEPVKLRR…RLVGFDRFEA (85 aa)) folds into the B5 domain. Asp476, Asp482, Glu485, and Glu486 together coordinate Mg(2+). Residues 721 to 814 (PTVPAMELDL…LVKQFSAELR (94 aa)) enclose the FDX-ACB domain.

It belongs to the phenylalanyl-tRNA synthetase beta subunit family. Type 1 subfamily. Tetramer of two alpha and two beta subunits. The cofactor is Mg(2+).

The protein localises to the cytoplasm. The enzyme catalyses tRNA(Phe) + L-phenylalanine + ATP = L-phenylalanyl-tRNA(Phe) + AMP + diphosphate + H(+). The chain is Phenylalanine--tRNA ligase beta subunit from Prochlorococcus marinus (strain MIT 9313).